The primary structure comprises 402 residues: Phosphopentomutase (402 aa).

Mn(2+) is bound by residues Asp-10, Asp-301, His-306, Asp-342, His-343, and His-354.

It belongs to the phosphopentomutase family. The cofactor is Mn(2+).

The protein localises to the cytoplasm. The catalysed reaction is 2-deoxy-alpha-D-ribose 1-phosphate = 2-deoxy-D-ribose 5-phosphate. The enzyme catalyses alpha-D-ribose 1-phosphate = D-ribose 5-phosphate. It functions in the pathway carbohydrate degradation; 2-deoxy-D-ribose 1-phosphate degradation; D-glyceraldehyde 3-phosphate and acetaldehyde from 2-deoxy-alpha-D-ribose 1-phosphate: step 1/2. Functionally, isomerase that catalyzes the conversion of deoxy-ribose 1-phosphate (dRib-1-P) and ribose 1-phosphate (Rib-1-P) to deoxy-ribose 5-phosphate (dRib-5-P) and ribose 5-phosphate (Rib-5-P), respectively. The chain is Phosphopentomutase from Aeromonas salmonicida (strain A449).